The sequence spans 155 residues: NADH-ubiquinone oxidoreductase chain 6 (155 aa).

Helical transmembrane passes span 10 to 30 (ILAIGLLSPVQSIVCLIVLFV), 43 to 63 (LMGILYVLIYVGAIAILFLFI), 75 to 95 (GTIHPLIFTILIICLIPLDLS), and 133 to 153 (AIPMILIGLILILSVIGAIAI).

It belongs to the complex I subunit 6 family.

Its subcellular location is the mitochondrion membrane. It catalyses the reaction a ubiquinone + NADH + 5 H(+)(in) = a ubiquinol + NAD(+) + 4 H(+)(out). Core subunit of the mitochondrial membrane respiratory chain NADH dehydrogenase (Complex I) that is believed to belong to the minimal assembly required for catalysis. Complex I functions in the transfer of electrons from NADH to the respiratory chain. The immediate electron acceptor for the enzyme is believed to be ubiquinone. This is NADH-ubiquinone oxidoreductase chain 6 (ND6) from Candida parapsilosis (Yeast).